A 247-amino-acid chain; its full sequence is Carboxy-S-adenosyl-L-methionine synthase (247 aa).

S-adenosyl-L-methionine-binding positions include Tyr40, 65–67, 90–91, 122–123, Asn137, and Arg204; these read GAS, DN, and DI.

It belongs to the class I-like SAM-binding methyltransferase superfamily. Cx-SAM synthase family. Homodimer.

It carries out the reaction prephenate + S-adenosyl-L-methionine = carboxy-S-adenosyl-L-methionine + 3-phenylpyruvate + H2O. Its function is as follows. Catalyzes the conversion of S-adenosyl-L-methionine (SAM) to carboxy-S-adenosyl-L-methionine (Cx-SAM). The protein is Carboxy-S-adenosyl-L-methionine synthase of Pseudomonas putida (strain ATCC 47054 / DSM 6125 / CFBP 8728 / NCIMB 11950 / KT2440).